A 245-amino-acid polypeptide reads, in one-letter code: Small ribosomal subunit protein uS2 (245 aa).

Belongs to the universal ribosomal protein uS2 family.

In Pseudomonas putida (strain ATCC 47054 / DSM 6125 / CFBP 8728 / NCIMB 11950 / KT2440), this protein is Small ribosomal subunit protein uS2.